We begin with the raw amino-acid sequence, 438 residues long: EF-hand calcium-binding domain-containing protein 3 (438 aa).

EF-hand domains follow at residues 47-82 and 83-118; these read SQMA…LGMN and LTKH…KNLF. Ca(2+) contacts are provided by Asp96, Asp98, Asp100, Lys102, and Asp107. Phosphotyrosine is present on Tyr279. Positions 405–415 are enriched in low complexity; the sequence is SSHNSRSSSSS. A disordered region spans residues 405 to 438; that stretch reads SSHNSRSSSSSDTSECYTDSGRKRKRKGLKGFQQ. The segment covering 426–438 has biased composition (basic residues); that stretch reads RKRKRKGLKGFQQ.

The sequence is that of EF-hand calcium-binding domain-containing protein 3 (EFCAB3) from Homo sapiens (Human).